Reading from the N-terminus, the 308-residue chain is Ribosomal RNA large subunit methyltransferase F (308 aa).

It belongs to the methyltransferase superfamily. METTL16/RlmF family.

Its subcellular location is the cytoplasm. It catalyses the reaction adenosine(1618) in 23S rRNA + S-adenosyl-L-methionine = N(6)-methyladenosine(1618) in 23S rRNA + S-adenosyl-L-homocysteine + H(+). Functionally, specifically methylates the adenine in position 1618 of 23S rRNA. The protein is Ribosomal RNA large subunit methyltransferase F of Salmonella agona (strain SL483).